A 932-amino-acid polypeptide reads, in one-letter code: Glycine dehydrogenase (decarboxylating) (932 aa).

Lysine 685 is subject to N6-(pyridoxal phosphate)lysine.

Belongs to the GcvP family. In terms of assembly, the glycine cleavage system is composed of four proteins: P, T, L and H. Pyridoxal 5'-phosphate is required as a cofactor.

It carries out the reaction N(6)-[(R)-lipoyl]-L-lysyl-[glycine-cleavage complex H protein] + glycine + H(+) = N(6)-[(R)-S(8)-aminomethyldihydrolipoyl]-L-lysyl-[glycine-cleavage complex H protein] + CO2. Its function is as follows. The glycine cleavage system catalyzes the degradation of glycine. The P protein binds the alpha-amino group of glycine through its pyridoxal phosphate cofactor; CO(2) is released and the remaining methylamine moiety is then transferred to the lipoamide cofactor of the H protein. The polypeptide is Glycine dehydrogenase (decarboxylating) (Brucella melitensis biotype 2 (strain ATCC 23457)).